A 386-amino-acid polypeptide reads, in one-letter code: Heat-inducible transcription repressor HrcA (386 aa).

The protein belongs to the HrcA family.

Its function is as follows. Negative regulator of class I heat shock genes (grpE-dnaK-dnaJ and groELS operons). Prevents heat-shock induction of these operons. The chain is Heat-inducible transcription repressor HrcA from Chlamydia felis (strain Fe/C-56) (Chlamydophila felis).